Consider the following 700-residue polypeptide: Polyribonucleotide nucleotidyltransferase (700 aa).

Mg(2+) is bound by residues Asp485 and Asp491. Positions 552 to 611 (PRITVIKINPEKIRDVIGKGGAVIRALTEETGTTIELEDDGTVKIASSNGEATKEAIRRI) constitute a KH domain. The 69-residue stretch at 621-689 (GRIYNGKVIR…RQGRVRLSIK (69 aa)) folds into the S1 motif domain.

The protein belongs to the polyribonucleotide nucleotidyltransferase family. In terms of assembly, component of the RNA degradosome, which is a multiprotein complex involved in RNA processing and mRNA degradation. Mg(2+) serves as cofactor.

The protein resides in the cytoplasm. The catalysed reaction is RNA(n+1) + phosphate = RNA(n) + a ribonucleoside 5'-diphosphate. Its function is as follows. Involved in mRNA degradation. Catalyzes the phosphorolysis of single-stranded polyribonucleotides processively in the 3'- to 5'-direction. The polypeptide is Polyribonucleotide nucleotidyltransferase (Shewanella baltica (strain OS155 / ATCC BAA-1091)).